The sequence spans 258 residues: GTP cyclohydrolase FolE2 (258 aa).

This sequence belongs to the GTP cyclohydrolase IV family.

The enzyme catalyses GTP + H2O = 7,8-dihydroneopterin 3'-triphosphate + formate + H(+). Its pathway is cofactor biosynthesis; 7,8-dihydroneopterin triphosphate biosynthesis; 7,8-dihydroneopterin triphosphate from GTP: step 1/1. Functionally, converts GTP to 7,8-dihydroneopterin triphosphate. This is GTP cyclohydrolase FolE2 from Lawsonia intracellularis (strain PHE/MN1-00).